A 246-amino-acid chain; its full sequence is MKIDFLTLFPEMFQGVLHSSILKQAQERGAVSFRVVNFREYSENKHKKVDDYPYGGGAGMVLSPQPLFDAVEDLTKKSSSTPRVILMCPQGETFTQRKAEELAQAEHLILLCGHYEGYDERIRSYLVTDELSIGDYVLTGGELGAMVIADSVTRLLPAVLGNETSAQTDSFSTGLLEYPQYTRPADFRGWKVPDVLLSGHHQNIERWRKEQSLKRTLERRPDLLEGRKLTEEEQELLDSIRKQQEK.

S-adenosyl-L-methionine-binding positions include glycine 113 and 133–138 (IGDYVL).

The protein belongs to the RNA methyltransferase TrmD family. As to quaternary structure, homodimer.

The protein localises to the cytoplasm. The enzyme catalyses guanosine(37) in tRNA + S-adenosyl-L-methionine = N(1)-methylguanosine(37) in tRNA + S-adenosyl-L-homocysteine + H(+). Its function is as follows. Specifically methylates guanosine-37 in various tRNAs. This chain is tRNA (guanine-N(1)-)-methyltransferase (trmD), found in Halalkalibacterium halodurans (strain ATCC BAA-125 / DSM 18197 / FERM 7344 / JCM 9153 / C-125) (Bacillus halodurans).